The primary structure comprises 359 residues: Guanine nucleotide-binding protein G(o) subunit alpha (359 aa).

The interval 1 to 26 (MGGCVSATPEEREAKTRSSVIDRQQR) is disordered. Gly-2 is lipidated: N-myristoyl glycine. Cys-4 carries S-palmitoyl cysteine lipidation. The G-alpha domain maps to 34–359 (NTIKILLLGA…RENLEAANLL (326 aa)). The interval 37–50 (KILLLGAGESGKST) is G1 motif. Residues 42 to 49 (GAGESGKS), 178 to 184 (LRSRVQT), 203 to 207 (DVGGQ), 272 to 275 (NKAD), and Ala-331 each bind GTP. Residues Ser-49 and Thr-184 each contribute to the Mg(2+) site. Residues 176 to 184 (DVLRSRVQT) are G2 motif. The segment at 199–208 (YRVVDVGGQR) is G3 motif. Residues 268–275 (ILFLNKAD) are G4 motif. A G5 motif region spans residues 329–334 (TTATDT).

The protein belongs to the G-alpha family. G(i/o/t/z) subfamily. In terms of assembly, g proteins are composed of 3 units; alpha, beta and gamma. The alpha chain contains the guanine nucleotide binding site.

Its function is as follows. Guanine nucleotide-binding proteins (G proteins) are involved as modulators or transducers in various transmembrane signaling systems. The G(o) protein function is not clear. The sequence is that of Guanine nucleotide-binding protein G(o) subunit alpha from Geodia cydonium (Sponge).